Consider the following 490-residue polypeptide: Glutamyl-tRNA(Gln) amidotransferase subunit A (490 aa).

Active-site charge relay system residues include lysine 79 and serine 154. Residue serine 178 is the Acyl-ester intermediate of the active site.

This sequence belongs to the amidase family. GatA subfamily. As to quaternary structure, heterotrimer of A, B and C subunits.

The enzyme catalyses L-glutamyl-tRNA(Gln) + L-glutamine + ATP + H2O = L-glutaminyl-tRNA(Gln) + L-glutamate + ADP + phosphate + H(+). Allows the formation of correctly charged Gln-tRNA(Gln) through the transamidation of misacylated Glu-tRNA(Gln) in organisms which lack glutaminyl-tRNA synthetase. The reaction takes place in the presence of glutamine and ATP through an activated gamma-phospho-Glu-tRNA(Gln). This chain is Glutamyl-tRNA(Gln) amidotransferase subunit A, found in Roseiflexus castenholzii (strain DSM 13941 / HLO8).